The chain runs to 163 residues: Shikimate kinase (163 aa).

ATP is bound at residue 10 to 15 (GVGKTT). Threonine 14 lines the Mg(2+) pocket. Substrate contacts are provided by aspartate 28, arginine 52, and glycine 75. Residue arginine 116 participates in ATP binding. Residue arginine 134 participates in substrate binding. ATP is bound at residue arginine 151.

The protein belongs to the shikimate kinase family. In terms of assembly, monomer. Requires Mg(2+) as cofactor.

It localises to the cytoplasm. It carries out the reaction shikimate + ATP = 3-phosphoshikimate + ADP + H(+). The protein operates within metabolic intermediate biosynthesis; chorismate biosynthesis; chorismate from D-erythrose 4-phosphate and phosphoenolpyruvate: step 5/7. In terms of biological role, catalyzes the specific phosphorylation of the 3-hydroxyl group of shikimic acid using ATP as a cosubstrate. In Streptococcus pyogenes serotype M4 (strain MGAS10750), this protein is Shikimate kinase.